Consider the following 288-residue polypeptide: Probable ketoamine kinase VP1481 (288 aa).

Residue 92–94 (NYL) coordinates ATP. The active-site Proton acceptor is the D195.

The protein belongs to the fructosamine kinase family.

Its function is as follows. Ketoamine kinase that phosphorylates ketoamines on the third carbon of the sugar moiety to generate ketoamine 3-phosphate. The polypeptide is Probable ketoamine kinase VP1481 (Vibrio parahaemolyticus serotype O3:K6 (strain RIMD 2210633)).